The chain runs to 357 residues: Uroporphyrinogen decarboxylase (357 aa).

Substrate contacts are provided by residues 27–31, D77, Y154, S209, and H330; that span reads RQAGR.

This sequence belongs to the uroporphyrinogen decarboxylase family. In terms of assembly, homodimer.

It is found in the cytoplasm. It carries out the reaction uroporphyrinogen III + 4 H(+) = coproporphyrinogen III + 4 CO2. It participates in porphyrin-containing compound metabolism; protoporphyrin-IX biosynthesis; coproporphyrinogen-III from 5-aminolevulinate: step 4/4. Catalyzes the decarboxylation of four acetate groups of uroporphyrinogen-III to yield coproporphyrinogen-III. The chain is Uroporphyrinogen decarboxylase from Acinetobacter baumannii (strain ACICU).